The following is a 2481-amino-acid chain: Tetratricopeptide repeat protein 28 (2481 aa).

Met-1 bears the N-acetylmethionine mark. Pro residues predominate over residues 1 to 14; that stretch reads MEQSPPPAPEPTQG. The segment at 1–48 is disordered; that stretch reads MEQSPPPAPEPTQGPTPARSRRRREPESPPASAPIPLFGADTIGQRSP. At Ser-28 the chain carries Phosphoserine. TPR repeat units lie at residues 58–91, 93–125, 126–159, 196–229, 234–267, 274–307, 314–347, 354–387, 394–427, 434–467, 474–507, 514–547, 554–587, 594–627, 634–667, 674–707, 714–747, 754–787, 794–827, 834–867, 877–910, 917–950, 957–990, 997–1030, 1037–1070, 1077–1110, 1117–1150, and 1169–1202; these read FVEK…DPQN, ILYS…NPKW, PKAY…DPKS, FVVV…GTCS, GSVF…AKTL, CRAH…AMKL, SSAL…AKQS, AREL…AKDL, ARAY…AQEL, MRAY…AEDL, GRAS…AQEL, GRAY…SMEV, ASTH…AREL, ARAL…APDL, GKVC…AKDL, AKAY…AQSL, FRAL…AHQV, ASAY…YQEL, CRAH…GQKL, AQVY…LQQL, GRAY…AQSL, AKAY…AHEL, AQAY…ARDM, SDAA…AEET, GRAY…AAQM, TVSY…AEQL, AKIR…FETI, and TSSY…AFAD. Ser-1590 is modified (phosphoserine). 3 disordered regions span residues 2004-2055, 2075-2161, and 2176-2339; these read FVSK…DEEE, NTCF…DPQE, and AVER…PADA. Composition is skewed to polar residues over residues 2029-2043 and 2096-2122; these read AYLQ…QLPP and SVSS…NSPF. Ser-2104 carries the phosphoserine modification. A compositionally biased stretch (low complexity) spans 2130-2146; sequence SSDTGESDQSSTETDST. Basic and acidic residues predominate over residues 2149 to 2159; it reads SQEESNPKLDP. Over residues 2183–2214 the composition is skewed to polar residues; sequence SGGQVSKSNNPEDGVQAPSSTAVFRASETSAF. A phosphoserine mark is found at Ser-2224 and Ser-2251. Polar residues predominate over residues 2238-2282; it reads RSSSLPKVSSGYSSPTTSEMSIKDSPSQHSGRPSPGCDSQTSQLD. The span at 2307–2339 shows a compositional bias: low complexity; the sequence is SPSSGHQSPAGSAPSPALSYSSAGSARSSPADA. Ser-2393 and Ser-2398 each carry phosphoserine. The interval 2420–2467 is disordered; it reads QHDGAPPKAPPNGHWRTETTSLGSLPLPAGPPATAPARPLRLPSGNGY.

Interacts with AURKB. In terms of tissue distribution, widely expressed in fetal tissues. In adult tissues, expressed in testis and ovary and, at much lower levels, in kidney and pancreas.

It is found in the cytoplasm. It localises to the cytoskeleton. The protein localises to the microtubule organizing center. Its subcellular location is the centrosome. The protein resides in the spindle. It is found in the spindle pole. It localises to the midbody. In terms of biological role, during mitosis, may be involved in the condensation of spindle midzone microtubules, leading to the formation of midbody. The polypeptide is Tetratricopeptide repeat protein 28 (TTC28) (Homo sapiens (Human)).